A 555-amino-acid chain; its full sequence is Oxygen-dependent choline dehydrogenase (555 aa).

4–33 contributes to the FAD binding site; the sequence is DYIIIGAGSAGNVLATRLTEDPDVTVLLLE. The active-site Proton acceptor is histidine 473.

Belongs to the GMC oxidoreductase family. It depends on FAD as a cofactor.

The catalysed reaction is choline + A = betaine aldehyde + AH2. The enzyme catalyses betaine aldehyde + NAD(+) + H2O = glycine betaine + NADH + 2 H(+). It participates in amine and polyamine biosynthesis; betaine biosynthesis via choline pathway; betaine aldehyde from choline (cytochrome c reductase route): step 1/1. Its function is as follows. Involved in the biosynthesis of the osmoprotectant glycine betaine. Catalyzes the oxidation of choline to betaine aldehyde and betaine aldehyde to glycine betaine at the same rate. This is Oxygen-dependent choline dehydrogenase from Proteus mirabilis (strain HI4320).